Reading from the N-terminus, the 118-residue chain is Small ribosomal subunit protein uS13 (118 aa).

The segment at 94–118 is disordered; that stretch reads SLPLRGQRTKTNARTRKGPRKPIRK.

This sequence belongs to the universal ribosomal protein uS13 family. Part of the 30S ribosomal subunit. Forms a loose heterodimer with protein S19. Forms two bridges to the 50S subunit in the 70S ribosome.

Functionally, located at the top of the head of the 30S subunit, it contacts several helices of the 16S rRNA. In the 70S ribosome it contacts the 23S rRNA (bridge B1a) and protein L5 of the 50S subunit (bridge B1b), connecting the 2 subunits; these bridges are implicated in subunit movement. Contacts the tRNAs in the A and P-sites. This is Small ribosomal subunit protein uS13 from Shewanella frigidimarina (strain NCIMB 400).